A 133-amino-acid polypeptide reads, in one-letter code: Small ribosomal subunit protein uS11 (133 aa).

The protein belongs to the universal ribosomal protein uS11 family. As to quaternary structure, part of the 30S ribosomal subunit. Interacts with proteins S7 and S18. Binds to IF-3.

Its function is as follows. Located on the platform of the 30S subunit, it bridges several disparate RNA helices of the 16S rRNA. Forms part of the Shine-Dalgarno cleft in the 70S ribosome. In Ralstonia nicotianae (strain ATCC BAA-1114 / GMI1000) (Ralstonia solanacearum), this protein is Small ribosomal subunit protein uS11.